Here is a 190-residue protein sequence, read N- to C-terminus: Movement protein (190 aa).

This sequence belongs to the tombusvirus/aureusvirus movement protein p22 family.

It localises to the host membrane. Transports viral genome to neighboring plant cells directly through plasmosdesmata, without any budding. The movement protein allows efficient cell to cell propagation, by bypassing the host cell wall barrier. This is Movement protein from Cucumber necrosis virus (CNV).